The following is a 271-amino-acid chain: Acetylglutamate kinase (271 aa).

Substrate contacts are provided by residues 41-42, arginine 63, and asparagine 166; that span reads GG.

Belongs to the acetylglutamate kinase family. ArgB subfamily.

The protein localises to the cytoplasm. The enzyme catalyses N-acetyl-L-glutamate + ATP = N-acetyl-L-glutamyl 5-phosphate + ADP. It participates in amino-acid biosynthesis; L-arginine biosynthesis; N(2)-acetyl-L-ornithine from L-glutamate: step 2/4. Functionally, catalyzes the ATP-dependent phosphorylation of N-acetyl-L-glutamate. This is Acetylglutamate kinase from Anaeromyxobacter sp. (strain Fw109-5).